The following is a 1798-amino-acid chain: Laminin subunit beta-2 (1798 aa).

Residues 1–32 form the signal peptide; that stretch reads MELTSRERGRGQPLPWELRLGLLLSVLAATLA. Residues 43–282 form the Laminin N-terminal domain; sequence SRGSCYPATG…ALYELVVRGN (240 aa). A glycan (N-linked (GlcNAc...) asparagine) is linked at Asn-248. Intrachain disulfides connect Cys-283/Cys-292, Cys-285/Cys-310, Cys-312/Cys-321, Cys-324/Cys-344, Cys-347/Cys-356, Cys-349/Cys-374, Cys-377/Cys-386, Cys-389/Cys-407, Cys-410/Cys-423, Cys-412/Cys-438, Cys-440/Cys-449, Cys-452/Cys-467, Cys-470/Cys-484, Cys-472/Cys-491, Cys-493/Cys-502, Cys-505/Cys-519, Cys-522/Cys-534, Cys-524/Cys-541, and Cys-543/Cys-552. 4 consecutive Laminin EGF-like domains span residues 283–346, 347–409, 410–469, and 470–521; these read CFCY…ACRK, CECH…VCRS, CDCD…GCRR, and CQCN…GCRP. N-linked (GlcNAc...) asparagine glycosylation is present at Asn-368. The 31-residue stretch at 522-552 folds into the Laminin EGF-like 5; truncated domain; the sequence is CDCDVGGALDPQCDEGTGQCHCRQHMVGRRC. A Laminin IV type B domain is found at 561–777; that stretch reads RPFLDHLIWE…LLISLSTLIY (217 aa). Disulfide bonds link Cys-783–Cys-795, Cys-785–Cys-802, Cys-804–Cys-813, Cys-816–Cys-828, Cys-831–Cys-843, Cys-833–Cys-850, Cys-852–Cys-861, Cys-864–Cys-874, Cys-877–Cys-886, Cys-879–Cys-893, Cys-896–Cys-905, Cys-908–Cys-924, Cys-927–Cys-943, Cys-929–Cys-954, Cys-956–Cys-965, Cys-968–Cys-983, Cys-986–Cys-1000, Cys-988–Cys-1007, Cys-1010–Cys-1019, Cys-1022–Cys-1035, Cys-1038–Cys-1058, Cys-1040–Cys-1065, Cys-1067–Cys-1076, Cys-1079–Cys-1092, Cys-1095–Cys-1107, Cys-1097–Cys-1114, Cys-1116–Cys-1125, Cys-1128–Cys-1140, Cys-1143–Cys-1155, Cys-1145–Cys-1162, Cys-1164–Cys-1173, and Cys-1176–Cys-1187. Laminin EGF-like domains lie at 783–830, 831–876, 877–926, 927–985, 986–1037, 1038–1094, 1095–1142, and 1143–1189; these read CQCN…GCQA, CQCS…SCRP, CVCN…QCRP, CPCP…RCQL, CECS…SCHR, CTCN…GCQP, CACH…QCHA, and CDCD…ACHP. An N-linked (GlcNAc...) asparagine glycan is attached at Asn-1085. The interval 1190–1409 is domain II; that stretch reads CHACFGDWDR…LSLTDINELV (220 aa). Residues Asn-1249, Asn-1308, and Asn-1348 are each glycosylated (N-linked (GlcNAc...) asparagine). Positions 1253–1319 form a coiled coil; the sequence is ASTAQLVEAT…TLRQLDQHLD (67 aa). A disordered region spans residues 1338–1364; that stretch reads SQSAEAERRANTSALAVPSPVSNSASA. Positions 1350 to 1363 are enriched in low complexity; sequence SALAVPSPVSNSAS. The tract at residues 1410–1442 is domain alpha; the sequence is CGAPGDAPCATSPCGGAGCRDEDGQPRCGGLSC. Positions 1443-1798 are domain I; that stretch reads NGAAATADLA…LQVQIYNTCQ (356 aa). Positions 1472–1526 form a coiled coil; the sequence is SILSRVAETRRQASEAQQRAQAALDKANASRGQVEQANQELQELIQSVKDFLNQE. A glycan (N-linked (GlcNAc...) asparagine) is linked at Asn-1499. Residue Ser-1532 is modified to Phosphoserine; by FAM20C. Residues 1577–1790 are a coiled coil; it reads VGDVRRAEQL…RSVLQAINLQ (214 aa).

As to quaternary structure, laminin is a complex glycoprotein, consisting of three different polypeptide chains (alpha, beta, gamma), which are bound to each other by disulfide bonds into a cross-shaped molecule comprising one long and three short arms with globules at each end. Beta-2 is a subunit of laminin-3 (laminin-121 or S-laminin), laminin-4 (laminin-221 or S-merosin), laminin-7 (laminin-321 or KS-laminin), laminin-9 (laminin-421), laminin-11 (laminin-521), laminin-14 (laminin-423) and laminin-15 (laminin-523).

It localises to the secreted. It is found in the extracellular space. The protein resides in the extracellular matrix. The protein localises to the basement membrane. Binding to cells via a high affinity receptor, laminin is thought to mediate the attachment, migration and organization of cells into tissues during embryonic development by interacting with other extracellular matrix components. In Homo sapiens (Human), this protein is Laminin subunit beta-2 (LAMB2).